Consider the following 692-residue polypeptide: Serine/threonine-protein kinase Nek8 (692 aa).

Residues Tyr-4–Cys-258 enclose the Protein kinase domain. Residues Val-10 to Val-18 and Lys-33 each bind ATP. Asp-128 (proton acceptor) is an active-site residue. The residue at position 162 (Thr-162) is a Phosphothreonine; by autocatalysis. The interval Ala-277–Gly-301 is disordered. A compositionally biased stretch (polar residues) spans Ala-282–Val-293. 5 RCC1 repeats span residues Ser-312–Ser-350, Gly-410–Glu-461, Arg-462–Pro-513, Gly-580–Glu-631, and Ser-632–Ser-684.

The protein belongs to the protein kinase superfamily. NEK Ser/Thr protein kinase family. NIMA subfamily. In terms of assembly, interacts with PKD2; may regulate PKD2 targeting to the cilium. Interacts with ANKS6. Component of a complex containing at least ANKS6, INVS, NEK8 and NPHP3. ANKS6 may organize complex assembly by linking INVS and NPHP3 to NEK8 and INVS may target the complex to the proximal ciliary axoneme. Interacts with ANKS3. Mg(2+) is required as a cofactor. Highest expression in thyroid, adrenal gland and skin. Low levels in spleen, colon and uterus. Overexpressed in breast tumors, with highest expression in infiltrating ductal carcinomas and moderate levels in mucinous adenocarcinoma.

It localises to the cytoplasm. It is found in the cytoskeleton. The protein localises to the cell projection. The protein resides in the cilium. Its subcellular location is the microtubule organizing center. It localises to the centrosome. It is found in the cilium axoneme. It catalyses the reaction L-seryl-[protein] + ATP = O-phospho-L-seryl-[protein] + ADP + H(+). The enzyme catalyses L-threonyl-[protein] + ATP = O-phospho-L-threonyl-[protein] + ADP + H(+). In terms of biological role, required for renal tubular integrity. May regulate local cytoskeletal structure in kidney tubule epithelial cells. May regulate ciliary biogenesis through targeting of proteins to the cilia. Plays a role in organogenesis, and is involved in the regulation of the Hippo signaling pathway. This chain is Serine/threonine-protein kinase Nek8 (NEK8), found in Homo sapiens (Human).